The chain runs to 344 residues: Sensor histidine kinase GraS (344 aa).

2 consecutive transmembrane segments (helical) span residues 18–38 and 43–63; these read IFWI…DYDI and IGFI…FTFL. The 207-residue stretch at 126-332 folds into the Histidine kinase domain; sequence EFVHDIKTPV…TFVLTFPKQN (207 aa). Residue His-129 is modified to Phosphohistidine; by autocatalysis.

Autophosphorylated.

The protein localises to the cell membrane. It catalyses the reaction ATP + protein L-histidine = ADP + protein N-phospho-L-histidine.. Functionally, member of the two-component regulatory system GraR/GraS involved in resistance against cationic antimicrobial peptides (CAMPs). GraS probably functions as a sensor protein kinase which is autophosphorylated at a histidine residue and transfers its phosphate group to GraR. This chain is Sensor histidine kinase GraS (graS), found in Staphylococcus haemolyticus (strain JCSC1435).